Here is a 185-residue protein sequence, read N- to C-terminus: Peptide deformylase (185 aa).

Positions 98 and 140 each coordinate Fe cation. Glu-141 is a catalytic residue. His-144 contributes to the Fe cation binding site.

It belongs to the polypeptide deformylase family. It depends on Fe(2+) as a cofactor.

The catalysed reaction is N-terminal N-formyl-L-methionyl-[peptide] + H2O = N-terminal L-methionyl-[peptide] + formate. Functionally, removes the formyl group from the N-terminal Met of newly synthesized proteins. Requires at least a dipeptide for an efficient rate of reaction. N-terminal L-methionine is a prerequisite for activity but the enzyme has broad specificity at other positions. In Parabacteroides distasonis (strain ATCC 8503 / DSM 20701 / CIP 104284 / JCM 5825 / NCTC 11152), this protein is Peptide deformylase.